Here is a 428-residue protein sequence, read N- to C-terminus: Tryptophan synthase beta chain (428 aa).

N6-(pyridoxal phosphate)lysine is present on Lys100.

This sequence belongs to the TrpB family. As to quaternary structure, tetramer of two alpha and two beta chains. Pyridoxal 5'-phosphate is required as a cofactor.

The enzyme catalyses (1S,2R)-1-C-(indol-3-yl)glycerol 3-phosphate + L-serine = D-glyceraldehyde 3-phosphate + L-tryptophan + H2O. It participates in amino-acid biosynthesis; L-tryptophan biosynthesis; L-tryptophan from chorismate: step 5/5. Its function is as follows. The beta subunit is responsible for the synthesis of L-tryptophan from indole and L-serine. The polypeptide is Tryptophan synthase beta chain (Streptomyces griseus subsp. griseus (strain JCM 4626 / CBS 651.72 / NBRC 13350 / KCC S-0626 / ISP 5235)).